The chain runs to 947 residues: Protein translocase subunit SecA 1 (947 aa).

ATP contacts are provided by residues Gln-87, 105–109 (GEGKT), and Asp-525. Positions 907–937 (DDADKAARDPNRPETWGKVGRNEDCPCNSGK) are disordered. Basic and acidic residues predominate over residues 908–918 (DADKAARDPNR). Residues Cys-931, Cys-933, Cys-942, and His-943 each coordinate Zn(2+).

It belongs to the SecA family. In terms of assembly, monomer and homodimer. Part of the essential Sec protein translocation apparatus which comprises SecA, SecYEG and auxiliary proteins SecDF-YajC and YidC. Zn(2+) serves as cofactor.

The protein resides in the cell inner membrane. It is found in the cytoplasm. The enzyme catalyses ATP + H2O + cellular proteinSide 1 = ADP + phosphate + cellular proteinSide 2.. Its function is as follows. Part of the Sec protein translocase complex. Interacts with the SecYEG preprotein conducting channel. Has a central role in coupling the hydrolysis of ATP to the transfer of proteins into and across the cell membrane, serving both as a receptor for the preprotein-SecB complex and as an ATP-driven molecular motor driving the stepwise translocation of polypeptide chains across the membrane. The sequence is that of Protein translocase subunit SecA 1 from Rhodopseudomonas palustris (strain BisA53).